Here is a 399-residue protein sequence, read N- to C-terminus: Probable WRKY transcription factor 48 (399 aa).

2 stretches are compositionally biased toward basic and acidic residues: residues Met1–His11 and Lys19–Gln38. Disordered regions lie at residues Met1–Asp57 and Ala138–Lys202. Positions Val143 to Asn161 are enriched in low complexity. Residues Glu162–Lys171 show a composition bias toward polar residues. Positions Gln184–Gln193 are enriched in low complexity. Residues Ser215–Pro280 constitute a DNA-binding region (WRKY). The interval Gln361–Lys399 is disordered. A compositionally biased stretch (polar residues) spans Gln383–Lys399.

It is found in the nucleus. Transcription factor. Interacts specifically with the W box (5'-(T)TGAC[CT]-3'), a frequently occurring elicitor-responsive cis-acting element. The protein is Probable WRKY transcription factor 48 (WRKY48) of Arabidopsis thaliana (Mouse-ear cress).